Consider the following 89-residue polypeptide: Small ribosomal subunit protein uS15 (89 aa).

This sequence belongs to the universal ribosomal protein uS15 family. In terms of assembly, part of the 30S ribosomal subunit. Forms a bridge to the 50S subunit in the 70S ribosome, contacting the 23S rRNA.

Its function is as follows. One of the primary rRNA binding proteins, it binds directly to 16S rRNA where it helps nucleate assembly of the platform of the 30S subunit by binding and bridging several RNA helices of the 16S rRNA. Forms an intersubunit bridge (bridge B4) with the 23S rRNA of the 50S subunit in the ribosome. This chain is Small ribosomal subunit protein uS15, found in Staphylococcus aureus (strain JH1).